Here is a 358-residue protein sequence, read N- to C-terminus: Peptide chain release factor 1 (358 aa).

N5-methylglutamine is present on Q237.

Belongs to the prokaryotic/mitochondrial release factor family. Methylated by PrmC. Methylation increases the termination efficiency of RF1.

The protein localises to the cytoplasm. Peptide chain release factor 1 directs the termination of translation in response to the peptide chain termination codons UAG and UAA. The polypeptide is Peptide chain release factor 1 (Mycoplasma mobile (strain ATCC 43663 / 163K / NCTC 11711) (Mesomycoplasma mobile)).